We begin with the raw amino-acid sequence, 155 residues long: uncharacterized protein (155 aa).

This is an uncharacterized protein from Autographa californica nuclear polyhedrosis virus (AcMNPV).